The chain runs to 372 residues: Alanine racemase (372 aa).

K33 acts as the Proton acceptor; specific for D-alanine in catalysis. Residue K33 is modified to N6-(pyridoxal phosphate)lysine. R131 provides a ligand contact to substrate. Y261 (proton acceptor; specific for L-alanine) is an active-site residue. M309 contributes to the substrate binding site.

It belongs to the alanine racemase family. The cofactor is pyridoxal 5'-phosphate.

The catalysed reaction is L-alanine = D-alanine. It functions in the pathway amino-acid biosynthesis; D-alanine biosynthesis; D-alanine from L-alanine: step 1/1. Catalyzes the interconversion of L-alanine and D-alanine. May also act on other amino acids. This is Alanine racemase (alr) from Salinispora arenicola (strain CNS-205).